A 186-amino-acid chain; its full sequence is Protein SPMIP2 (186 aa).

A disordered region spans residues 163 to 186 (SSLPRASKPPKLPKLPKKEKKRKH). Residues 176-186 (KLPKKEKKRKH) are compositionally biased toward basic residues.

This Homo sapiens (Human) protein is Protein SPMIP2.